The sequence spans 493 residues: Probable UTP--glucose-1-phosphate uridylyltransferase (493 aa).

UTP is bound by residues 105–108 (LTGK), glutamine 181, glycine 211, and aspartate 242. 107 to 108 (GK) provides a ligand contact to substrate. 240–242 (NVD) contacts substrate.

Belongs to the UDPGP type 1 family.

The enzyme catalyses alpha-D-glucose 1-phosphate + UTP + H(+) = UDP-alpha-D-glucose + diphosphate. Plays a central role as a glucosyl donor in cellular metabolic pathways. This chain is Probable UTP--glucose-1-phosphate uridylyltransferase, found in Saccharomyces cerevisiae (strain ATCC 204508 / S288c) (Baker's yeast).